We begin with the raw amino-acid sequence, 92 residues long: Transcription factor S4 (92 aa).

The segment at 1 to 31 (MRFCPKCGSFLKVKGNKMVCSKCGYSDHDVE) is ZR-N. Zn(2+)-binding residues include Cys4, Cys7, Cys20, and Cys23. The tract at residues 32 to 56 (KVILKENVAHENDKTIIADGETIEG) is flexible linker. The interval 55–92 (EGRVAISLCPRCGSVRAILLNKKKRLYRCMTCNFVYNI) is ZR-C. Zn(2+) contacts are provided by Cys63 and Cys66. Active-site residues include Lys76, Lys77, and Lys78. Zn(2+)-binding residues include Cys83 and Cys86.

It belongs to the archaeal RpoM/eukaryotic RPA12/RPB9/RPC11 RNA polymerase family. Interacts with RNA polymerase. Zn(2+) serves as cofactor.

Its function is as follows. A potent inhibitor of RNA polymerase (RNAP) probably involved in viral defense. Destabilizes the transcription pre-initiation complex of TBP, TFB, DNA and RNAP, inhibits abortive transcription initiation, productive initiation and transcription elongation. Increases the RNAP KM for NTPs about 50-fold. Overexpression of TFS1-tip4 (TFS1 with the active tip of this protein, phenocopies this protein) in S.acidocaldarius MW001 leads to severe growth inhibition. When bound to RNAP induces conformational changes that widen the DNA-binding channel, probably destabilizing the interaction of DNA with RNAP. This chain is Transcription factor S4, found in Saccharolobus solfataricus (strain ATCC 35092 / DSM 1617 / JCM 11322 / P2) (Sulfolobus solfataricus).